The sequence spans 355 residues: UDP-N-acetylglucosamine--N-acetylmuramyl-(pentapeptide) pyrophosphoryl-undecaprenol N-acetylglucosamine transferase (355 aa).

UDP-N-acetyl-alpha-D-glucosamine contacts are provided by residues 14-16 (SGG), Asn-126, Arg-162, Ser-190, Ile-243, 262-267 (ALTVSE), and Gln-288.

This sequence belongs to the glycosyltransferase 28 family. MurG subfamily.

The protein localises to the cell inner membrane. It catalyses the reaction di-trans,octa-cis-undecaprenyl diphospho-N-acetyl-alpha-D-muramoyl-L-alanyl-D-glutamyl-meso-2,6-diaminopimeloyl-D-alanyl-D-alanine + UDP-N-acetyl-alpha-D-glucosamine = di-trans,octa-cis-undecaprenyl diphospho-[N-acetyl-alpha-D-glucosaminyl-(1-&gt;4)]-N-acetyl-alpha-D-muramoyl-L-alanyl-D-glutamyl-meso-2,6-diaminopimeloyl-D-alanyl-D-alanine + UDP + H(+). It participates in cell wall biogenesis; peptidoglycan biosynthesis. Cell wall formation. Catalyzes the transfer of a GlcNAc subunit on undecaprenyl-pyrophosphoryl-MurNAc-pentapeptide (lipid intermediate I) to form undecaprenyl-pyrophosphoryl-MurNAc-(pentapeptide)GlcNAc (lipid intermediate II). This Blochmanniella pennsylvanica (strain BPEN) protein is UDP-N-acetylglucosamine--N-acetylmuramyl-(pentapeptide) pyrophosphoryl-undecaprenol N-acetylglucosamine transferase.